An 879-amino-acid polypeptide reads, in one-letter code: Pyruvate dehydrogenase phosphatase regulatory subunit, mitochondrial (879 aa).

Residues 1-27 (MMFYRLLSIVGRQRASPGWQNWSSARN) constitute a mitochondrion transit peptide.

It belongs to the GcvT family. In terms of assembly, heterodimer of a catalytic (PDP1) and a regulatory (PDPR) subunit.

The protein resides in the mitochondrion matrix. Its function is as follows. Decreases the sensitivity of PDP1 to magnesium ions, and this inhibition is reversed by the polyamine spermine. The protein is Pyruvate dehydrogenase phosphatase regulatory subunit, mitochondrial (PDPR) of Homo sapiens (Human).